Consider the following 161-residue polypeptide: Small ribosomal subunit protein uS9 (161 aa).

Positions 1-38 (MAQTITSLADLKQGPGAEPAGLSAEPQEPKLDKEGRAY) are disordered. Basic and acidic residues predominate over residues 27-38 (QEPKLDKEGRAY).

Belongs to the universal ribosomal protein uS9 family.

In Rhodospirillum centenum (strain ATCC 51521 / SW), this protein is Small ribosomal subunit protein uS9.